Here is a 256-residue protein sequence, read N- to C-terminus: Type III pantothenate kinase (256 aa).

ATP is bound at residue 6 to 13 (DVGNTNMV). Substrate is bound by residues Tyr-100 and 107–110 (GADR). The active-site Proton acceptor is Asp-109. Asp-129 lines the K(+) pocket. Residue Thr-132 coordinates ATP. Thr-184 serves as a coordination point for substrate.

The protein belongs to the type III pantothenate kinase family. In terms of assembly, homodimer. Requires NH4(+) as cofactor. K(+) is required as a cofactor.

It is found in the cytoplasm. The enzyme catalyses (R)-pantothenate + ATP = (R)-4'-phosphopantothenate + ADP + H(+). Its pathway is cofactor biosynthesis; coenzyme A biosynthesis; CoA from (R)-pantothenate: step 1/5. Functionally, catalyzes the phosphorylation of pantothenate (Pan), the first step in CoA biosynthesis. This is Type III pantothenate kinase from Clostridioides difficile (strain 630) (Peptoclostridium difficile).